The primary structure comprises 1022 residues: Sodium/potassium-transporting ATPase subunit alpha-1 (1022 aa).

A propeptide spanning residues 1-5 (MGRGT) is cleaved from the precursor. The segment covering 1 to 10 (MGRGTGHDQY) has biased composition (basic and acidic residues). The disordered stretch occupies residues 1 to 34 (MGRGTGHDQYELAATSEGGRKKKRDKKKKDMDDL). Residues 6–86 (GHDQYELAAT…NALTPPPTTP (81 aa)) are Cytoplasmic-facing. S16 bears the Phosphoserine; by PKC mark. An interaction with phosphoinositide-3 kinase region spans residues 81–83 (PPP). Residues 87-107 (EWVKFCRQLFGGFSMLLWIGA) traverse the membrane as a helical segment. At 108 to 130 (ILCFLAYGIQAASEDEPANDNLY) the chain is on the extracellular side. A helical transmembrane segment spans residues 131–151 (LGVVLSAVVIITGCFSYYQEA). Residues 152-287 (KSSRIMDSFK…VGRTPISIEI (136 aa)) lie on the Cytoplasmic side of the membrane. The segment at 213-234 (DNSSLTGESEPQTRSPDFSNEN) is disordered. Residues 288–307 (EHFIHIITGVAVFLGVSFFI) traverse the membrane as a helical segment. The Extracellular segment spans residues 308-319 (LSLILGYAWLEA). A helical transmembrane segment spans residues 320 to 337 (VIFLIGIIVANVPEGLLA). Residues 338 to 771 (TVTVCLTLTA…EEGRLIFDNL (434 aa)) are Cytoplasmic-facing. D375 functions as the 4-aspartylphosphate intermediate in the catalytic mechanism. K486 provides a ligand contact to ATP. The Mg(2+) site is built by D716 and D720. A helical transmembrane segment spans residues 772 to 791 (KKSIAYTLTSNIPEITPFLL). Residues 792 to 801 (FIIANIPLPL) lie on the Extracellular side of the membrane. A helical transmembrane segment spans residues 802-822 (GTVTILCIDLGTDMVPAISLA). The Cytoplasmic segment spans residues 823 to 842 (YEAAESDIMKRQPRNPRTDK). A helical transmembrane segment spans residues 843–865 (LVNERLISIAYGQIGMMQATAGF). Topologically, residues 866–917 (FTYFVILAENGFLPSTLLGIRVKWDDKYVNDLEDSYGQQWTYEQRKIVEYTC) are extracellular. Residues 918–937 (HTSFFASIVIVQWADLIICK) form a helical membrane-spanning segment. Residues 938–950 (TRRNSIIQQGMKN) are Cytoplasmic-facing. S942 carries the phosphoserine; by PKA modification. Residues 951-969 (KILIFGLFEETALAAFLSY) traverse the membrane as a helical segment. Topologically, residues 970–984 (CPGMDVALRMYPLKP) are extracellular. A helical transmembrane segment spans residues 985 to 1005 (SWWFCAFPYSLLIFLYDEARR). At 1006 to 1022 (FILRRNPDGWVERETYY) the chain is on the cytoplasmic side.

It belongs to the cation transport ATPase (P-type) (TC 3.A.3) family. Type IIC subfamily. As to quaternary structure, the sodium/potassium-transporting ATPase is composed of a catalytic alpha subunit, an auxiliary non-catalytic beta subunit and an additional regulatory subunit.

Its subcellular location is the cell membrane. The protein resides in the sarcolemma. The catalysed reaction is K(+)(out) + Na(+)(in) + ATP + H2O = K(+)(in) + Na(+)(out) + ADP + phosphate + H(+). Its function is as follows. This is the catalytic component of the active enzyme, which catalyzes the hydrolysis of ATP coupled with the exchange of sodium and potassium ions across the plasma membrane. This action creates the electrochemical gradient of sodium and potassium ions, providing the energy for active transport of various nutrients. This chain is Sodium/potassium-transporting ATPase subunit alpha-1 (atp1a1), found in Anguilla anguilla (European freshwater eel).